We begin with the raw amino-acid sequence, 347 residues long: MAEITAKLVKELREKSGAGVMDAKKALVETDGDIEKAIELLREKGMAKAAKKADRVAAEGLTGVYVNGNVAAVVEVNAETDFVAKNAQFVDLVNATAKVIAEGKPANNEEALALTMPSGETLEAAYVSATATIGEKISFRRFALIEKTDAQHFGAYQHNGGRIGVISVIEGGDDALAKQISMHIAAMKPTVLSYKELDEQFVKDELAQLNHVIDQDNESRAMVGKPALPHLKYGSKAQLTDAVVAQAEEDIKAELAAEGKPEKIWDKIIPGKMDRFMLDNTKVDQAYTLLAQVYIMDDSKTVEAYLESVNASVVEFARFEVGEGIEKAANDFENEVAATMAAALGQN.

The segment at 80 to 83 (TDFV) is involved in Mg(2+) ion dislocation from EF-Tu.

The protein belongs to the EF-Ts family.

Its subcellular location is the cytoplasm. Its function is as follows. Associates with the EF-Tu.GDP complex and induces the exchange of GDP to GTP. It remains bound to the aminoacyl-tRNA.EF-Tu.GTP complex up to the GTP hydrolysis stage on the ribosome. The chain is Elongation factor Ts from Streptococcus sanguinis (strain SK36).